Consider the following 98-residue polypeptide: UPF0175 protein VNG_0066H (98 aa).

It belongs to the UPF0175 family.

This Halobacterium salinarum (strain ATCC 700922 / JCM 11081 / NRC-1) (Halobacterium halobium) protein is UPF0175 protein VNG_0066H.